The chain runs to 195 residues: Imidazoleglycerol-phosphate dehydratase (195 aa).

It belongs to the imidazoleglycerol-phosphate dehydratase family.

It localises to the cytoplasm. It catalyses the reaction D-erythro-1-(imidazol-4-yl)glycerol 3-phosphate = 3-(imidazol-4-yl)-2-oxopropyl phosphate + H2O. The protein operates within amino-acid biosynthesis; L-histidine biosynthesis; L-histidine from 5-phospho-alpha-D-ribose 1-diphosphate: step 6/9. This is Imidazoleglycerol-phosphate dehydratase from Burkholderia mallei (strain NCTC 10247).